We begin with the raw amino-acid sequence, 348 residues long: Quinone oxidoreductase-like protein 1 (348 aa).

Belongs to the zinc-containing alcohol dehydrogenase family. Quinone oxidoreductase subfamily. In terms of assembly, component of the FERRY complex composed of five subunits, TBCK, PPP1R21, FERRY3, CRYZL1 and GATD1 with a ratio of 1:2:1:2:4, respectively.

It localises to the early endosome. Functionally, component of the FERRY complex (Five-subunit Endosomal Rab5 and RNA/ribosome intermediary). The FERRY complex directly interacts with mRNAs and RAB5A, and functions as a RAB5A effector involved in the localization and the distribution of specific mRNAs most likely by mediating their endosomal transport. The complex recruits mRNAs and ribosomes to early endosomes through direct mRNA-interaction. The chain is Quinone oxidoreductase-like protein 1 (Cryzl1) from Mus musculus (Mouse).